The primary structure comprises 89 residues: Small ribosomal subunit protein uS14A (89 aa).

The segment at 29 to 62 (AAGDRTALAKLPRDSNPNRLRLRDQTDGRPRGYM) is disordered. Positions 49 to 58 (RLRDQTDGRP) are enriched in basic and acidic residues.

The protein belongs to the universal ribosomal protein uS14 family. As to quaternary structure, part of the 30S ribosomal subunit. Contacts proteins S3 and S10.

Binds 16S rRNA, required for the assembly of 30S particles and may also be responsible for determining the conformation of the 16S rRNA at the A site. The protein is Small ribosomal subunit protein uS14A of Enterococcus faecalis (strain ATCC 700802 / V583).